Here is an 856-residue protein sequence, read N- to C-terminus: Dual specificity protein kinase TTK (856 aa).

Residue Met1 is modified to N-acetylmethionine. Thr32 carries the post-translational modification Phosphothreonine. 3 positions are modified to phosphoserine: Ser36, Ser277, and Ser342. Thr380 bears the Phosphothreonine mark. Ser383, Ser435, and Ser454 each carry phosphoserine. The region spanning 524 to 790 (YSILKQIGSG…IPELLTHPYV (267 aa)) is the Protein kinase domain. ATP contacts are provided by residues 530–538 (IGSGGSSKV) and Lys552. Asp646 acts as the Proton acceptor in catalysis. Ser820 carries the post-translational modification Phosphoserine. A disordered region spans residues 837-856 (CGEGQDSSSSKTFDKKRERK).

Belongs to the protein kinase superfamily. Ser/Thr protein kinase family. Interacts with TPR; the interactions occurs in a microtubule-independent manner. Interacts with MAD1L1 and MAD2L1. Post-translationally, autophosphorylated. In terms of tissue distribution, present in rapidly proliferating cell lines; high levels in testis, bone marrow, spleen and thymus. Low levels in brain, heart, lung and kidney.

The enzyme catalyses L-seryl-[protein] + ATP = O-phospho-L-seryl-[protein] + ADP + H(+). It carries out the reaction L-threonyl-[protein] + ATP = O-phospho-L-threonyl-[protein] + ADP + H(+). The catalysed reaction is L-tyrosyl-[protein] + ATP = O-phospho-L-tyrosyl-[protein] + ADP + H(+). Its activity is regulated as follows. Inhibited by the ATP-competitive kinase inhibitor, SP600125. In terms of biological role, involved in mitotic spindle assembly checkpoint signaling, a process that delays anaphase until chromosomes are bioriented on the spindle, and in the repair of incorrect mitotic kinetochore-spindle microtubule attachments. Phosphorylates MAD1L1 to promote the mitotic spindle assembly checkpoint. Phosphorylates CDCA8/Borealin leading to enhanced AURKB activity at the kinetochore. Phosphorylates SKA3 at 'Ser-34' leading to dissociation of the SKA complex from microtubules and destabilization of microtubule-kinetochore attachments. Phosphorylates KNL1, KNTC1 and autophosphorylates. Phosphorylates MCRS1 which enhances recruitment of KIF2A to the minus end of spindle microtubules and promotes chromosome alignment. This chain is Dual specificity protein kinase TTK (Ttk), found in Mus musculus (Mouse).